We begin with the raw amino-acid sequence, 182 residues long: MSVDVTNETQWVIDPKVFSDLGIWVLDQMRVSTQSDLTIMFVDPDPIAELHMRWMNLEGPTDVMSFPMDELRPGDGKTVMEGVLGDIVICPWVAAQQAAAAGHSTMQEMLLLTIHGILHLLGYDHVTPEQERQMFGLQRQLLLTFFALRHDANVQATLPAGTPDALALYDAAHGAGRDLDSK.

Zn(2+)-binding residues include His115, His119, and His125.

Belongs to the endoribonuclease YbeY family. It depends on Zn(2+) as a cofactor.

The protein localises to the cytoplasm. Functionally, single strand-specific metallo-endoribonuclease involved in late-stage 70S ribosome quality control and in maturation of the 3' terminus of the 16S rRNA. This is Endoribonuclease YbeY from Bifidobacterium longum (strain NCC 2705).